We begin with the raw amino-acid sequence, 148 residues long: Putative pre-16S rRNA nuclease (148 aa).

Belongs to the YqgF nuclease family.

The protein resides in the cytoplasm. Could be a nuclease involved in processing of the 5'-end of pre-16S rRNA. The protein is Putative pre-16S rRNA nuclease of Colwellia psychrerythraea (strain 34H / ATCC BAA-681) (Vibrio psychroerythus).